A 61-amino-acid chain; its full sequence is [Val1,Thr6]-bradykinyl-Val,Asp (61 aa).

The first 22 residues, 1 to 22, serve as a signal peptide directing secretion; that stretch reads MAFLKKSLFLVLFLGVVSLSFC. Residues 23–48 constitute a propeptide that is removed on maturation; it reads EEEEREEHEEEKREAEAAESAENLIS. Positions 27-61 are disordered; that stretch reads REEHEEEKREAEAAESAENLISKRVPPGFTPFRVD.

In terms of tissue distribution, expressed by the skin glands. Expression levels in inguinal glands and granular glands are virtually the same.

It is found in the secreted. Its function is as follows. Induces contraction of rat ileum smooth muscle (EC(50)=2.73 uM) but has no activity towards rat smooth muscle from tail artery, urinary bladder or uterus. Binds to both bradykinin receptor B1 (BDKRB1) and B2 (BDKRB2); the effect via BDKRB1 is stronger. The sequence is that of [Val1,Thr6]-bradykinyl-Val,Asp from Physalaemus nattereri (Cuyaba dwarf frog).